The sequence spans 362 residues: Putative lipoprotein YdaJ (362 aa).

The N-terminal stretch at 1 to 20 (MRHVLIAVILFFLSIGLSAG) is a signal peptide. C21 carries N-palmitoyl cysteine lipidation. C21 carries the S-diacylglycerol cysteine lipid modification.

Its subcellular location is the cell membrane. This chain is Putative lipoprotein YdaJ (ydaJ), found in Bacillus subtilis (strain 168).